Here is a 299-residue protein sequence, read N- to C-terminus: Pentalenolactone F synthase (299 aa).

2 residues coordinate Fe cation: histidine 105 and aspartate 107. Residues threonine 133 and tryptophan 251 each coordinate 2-oxoglutarate. A Fe cation-binding site is contributed by histidine 266. Arginine 277 contributes to the 2-oxoglutarate binding site.

This sequence belongs to the TfdA dioxygenase family. It depends on Fe(2+) as a cofactor.

It carries out the reaction pentalenolactone D + 2 2-oxoglutarate + 2 O2 = pentalenolactone F + 2 succinate + 2 CO2 + H2O. Its pathway is antibiotic biosynthesis; pentalenolactone biosynthesis. Activated by ascorbate. Functionally, catalyzes the Fe(2+) and alpha-ketoglutarate-dependent oxidation of pentalenolactone D to pentalenolactone F in the biosynthesis of pentalenolactone antibiotic. Also able to catalyze the oxidation of pentalenolactone D to pentalenolactone E. In Streptomyces arenae, this protein is Pentalenolactone F synthase (pntD).